The following is a 44-amino-acid chain: Thioredoxin (44 aa).

A Thioredoxin domain is found at 2–44 (IELDKSNFEEEVLKAEGTVLVDFWSPSCEPCKALMPHVHDFEE). Cysteine 29 and cysteine 32 are oxidised to a cystine.

The protein belongs to the thioredoxin family.

Functionally, participates in various redox reactions through the reversible oxidation of its active center dithiol to a disulfide and catalyzes dithiol-disulfide exchange reactions. The sequence is that of Thioredoxin (trxA) from Tissierella creatinophila.